Consider the following 124-residue polypeptide: UPF0231 protein Shewmr7_3366 (124 aa).

The protein belongs to the UPF0231 family.

This chain is UPF0231 protein Shewmr7_3366, found in Shewanella sp. (strain MR-7).